We begin with the raw amino-acid sequence, 197 residues long: RNA pyrophosphohydrolase (197 aa).

Residues 6 to 154 form the Nudix hydrolase domain; it reads GYRPNVGIVL…KREVYQLALS (149 aa). The Nudix box motif lies at 38 to 59; it reads GGIQHGESPEQAMYRELHEEVG.

Belongs to the Nudix hydrolase family. RppH subfamily. It depends on a divalent metal cation as a cofactor.

In terms of biological role, accelerates the degradation of transcripts by removing pyrophosphate from the 5'-end of triphosphorylated RNA, leading to a more labile monophosphorylated state that can stimulate subsequent ribonuclease cleavage. This Polynucleobacter necessarius subsp. necessarius (strain STIR1) protein is RNA pyrophosphohydrolase.